The following is a 464-amino-acid chain: ATP synthase subunit beta (464 aa).

Position 154 to 161 (154 to 161 (GGAGVGKT)) interacts with ATP.

Belongs to the ATPase alpha/beta chains family. F-type ATPases have 2 components, CF(1) - the catalytic core - and CF(0) - the membrane proton channel. CF(1) has five subunits: alpha(3), beta(3), gamma(1), delta(1), epsilon(1). CF(0) has three main subunits: a(1), b(2) and c(9-12). The alpha and beta chains form an alternating ring which encloses part of the gamma chain. CF(1) is attached to CF(0) by a central stalk formed by the gamma and epsilon chains, while a peripheral stalk is formed by the delta and b chains.

It is found in the cell inner membrane. It catalyses the reaction ATP + H2O + 4 H(+)(in) = ADP + phosphate + 5 H(+)(out). In terms of biological role, produces ATP from ADP in the presence of a proton gradient across the membrane. The catalytic sites are hosted primarily by the beta subunits. The protein is ATP synthase subunit beta of Blochmanniella floridana.